The primary structure comprises 2656 residues: 1-phosphatidylinositol 3-phosphate 5-kinase (2656 aa).

A disordered region spans residues 24–159 (FGTDDSQKDF…NSTNNDTSSN (136 aa)). Low complexity-rich tracts occupy residues 59–107 (NNNN…NNNN) and 124–159 (SNTT…TSSN). The FYVE-type zinc-finger motif lies at 198–255 (DHSSAVCYECSEEFTTFKRRHHCRLCGQIFCWKCSQKTLTDGKGERVRVCNFCYRRYM). Positions 204, 207, 220, 223, 228, 231, 247, and 250 each coordinate Zn(2+). Positions 304 to 331 (NVSLGNSGDNSSFVQSPNNNFSQSPTFS) are enriched in polar residues. 12 disordered regions span residues 304 to 383 (NVSL…NNQQ), 465 to 495 (DHHQ…SPIV), 517 to 570 (DNLD…SSSS), 618 to 657 (NNND…NTSF), 670 to 823 (TIGR…QQQP), 1115 to 1150 (SNSI…NNST), 1633 to 1659 (RSKR…QILI), 1710 to 1844 (VNNN…SSTP), 2031 to 2127 (QQQQ…SISP), 2179 to 2208 (NQQQ…SIIE), 2246 to 2304 (QQGD…SSNS), and 2617 to 2656 (NNNN…QINK). Residues 332–355 (QQQQQQQQQQQQQQQQQQQQQQQQ) are compositionally biased toward low complexity. Polar residues-rich tracts occupy residues 356-371 (TTGV…NSTL), 473-489 (SNSH…TPSG), and 542-557 (SHSS…TVST). Low complexity-rich tracts occupy residues 558–570 (GESN…SSSS), 618–637 (NNND…NNNN), 674–730 (NNNN…NLPN), 743–757 (QQQQ…QPQP), and 811–823 (PSSS…QQQP). 2 stretches are compositionally biased toward low complexity: residues 1639–1656 (QQQQ…PQPQ) and 1710–1746 (VNNN…NNNN). Coiled-coil stretches lie at residues 1741–1823 (NNNN…NNNN) and 2019–2061 (KRIS…QQEQ). Basic and acidic residues predominate over residues 1750-1798 (NKSENENENKNENKNENENENENKNENKNENENENKKENENQLEIKNEN). Low complexity-rich tracts occupy residues 1807-1833 (NNNN…IDNN), 2031-2061 (QQQQ…QQEQ), 2078-2107 (SPSS…SETN), and 2118-2127 (LSGSPISISP). The span at 2193 to 2202 (IDEKDDRNTE) shows a compositional bias: basic and acidic residues. Low complexity-rich tracts occupy residues 2252–2283 (NNNN…NNNN) and 2618–2647 (NNNN…GNIN). In terms of domain architecture, PIPK spans 2275–2596 (NNNNTNNNNE…RFRDAMWLYF (322 aa)).

Its subcellular location is the endosome membrane. It localises to the early endosome membrane. It is found in the cytoplasmic vesicle. The protein resides in the phagosome membrane. The protein localises to the late endosome membrane. The catalysed reaction is a 1,2-diacyl-sn-glycero-3-phospho-(1D-myo-inositol-3-phosphate) + ATP = a 1,2-diacyl-sn-glycero-3-phospho-(1D-myo-inositol-3,5-bisphosphate) + ADP + H(+). The enzyme catalyses a 1,2-diacyl-sn-glycero-3-phospho-(1D-myo-inositol) + ATP = a 1,2-diacyl-sn-glycero-3-phospho-(1D-myo-inositol-5-phosphate) + ADP + H(+). It carries out the reaction L-seryl-[protein] + ATP = O-phospho-L-seryl-[protein] + ADP + H(+). Its function is as follows. Dual specificity kinase part of the PI(3,5)P2 regulatory complex which regulates both the synthesis and turnover of phosphatidylinositol 3,5-bisphosphate (PtdIns(3,5)P2). Catalyzes the phosphorylation of phosphatidylinositol 3-phosphate on the fifth hydroxyl of the myo-inositol ring, to form phosphatidylinositol 3,5-bisphosphate. This is 1-phosphatidylinositol 3-phosphate 5-kinase (pip5k3) from Dictyostelium discoideum (Social amoeba).